Here is a 493-residue protein sequence, read N- to C-terminus: Glycerol kinase (493 aa).

Threonine 13 is an ADP binding site. Positions 13, 14, and 15 each coordinate ATP. Threonine 13 is a binding site for sn-glycerol 3-phosphate. Position 17 (arginine 17) interacts with ADP. Sn-glycerol 3-phosphate is bound by residues arginine 83, glutamate 84, tyrosine 135, and aspartate 244. The glycerol site is built by arginine 83, glutamate 84, tyrosine 135, aspartate 244, and glutamine 245. 2 residues coordinate ADP: threonine 266 and glycine 309. 4 residues coordinate ATP: threonine 266, glycine 309, glutamine 313, and glycine 410. Residues glycine 410 and asparagine 414 each contribute to the ADP site.

The protein belongs to the FGGY kinase family.

The catalysed reaction is glycerol + ATP = sn-glycerol 3-phosphate + ADP + H(+). It functions in the pathway polyol metabolism; glycerol degradation via glycerol kinase pathway; sn-glycerol 3-phosphate from glycerol: step 1/1. With respect to regulation, inhibited by fructose 1,6-bisphosphate (FBP). In terms of biological role, key enzyme in the regulation of glycerol uptake and metabolism. Catalyzes the phosphorylation of glycerol to yield sn-glycerol 3-phosphate. The chain is Glycerol kinase from Shewanella pealeana (strain ATCC 700345 / ANG-SQ1).